The following is a 75-amino-acid chain: Metallothionein-like protein 1 (75 aa).

It belongs to the metallothionein superfamily. Type 15 family.

In terms of biological role, metallothioneins have a high content of cysteine residues that bind various heavy metals. This chain is Metallothionein-like protein 1 (MT1B), found in Trifolium repens (Creeping white clover).